The primary structure comprises 804 residues: Mechanosensitive cation channel TMEM63A (804 aa).

The Extracellular portion of the chain corresponds to 1–51 (MTSSPFLDPWPSKAVFVRERLGLGERPNDSYCYNSAKNSTVLQGVTFGGIP). Residue N38 is glycosylated (N-linked (GlcNAc...) asparagine). The helical transmembrane segment at 52–74 (TVLLLDVSCFLFLILVFSIIRRR) threads the bilayer. The Cytoplasmic segment spans residues 75–133 (FWDYGRIALVSEAGSEARFQRLSSSSSGQQDFENELGCCPWLTAIFRLHDDQILEWCGE). A helical transmembrane segment spans residues 134–166 (DAIHYLSFQRHIIFLLVVISFLSLCVILPVNLS). Residues 167 to 190 (GDLLGKDPYSFGRTTIANLQTDND) are Extracellular-facing. Residues 191–216 (LLWLHTVFSVIYLFLTVGFMWHHTRS) traverse the membrane as a helical segment. Topologically, residues 217 to 415 (IRYKEESLVR…CWKNLSIQGV (199 aa)) are cytoplasmic. Residues 218–413 (RYKEESLVRQ…DICWKNLSIQ (196 aa)) form an intracellular linker IL2; confers mechanosensitivity region. Residues 416-443 (RWWLQWLGINFSLFVVLFFLTTPSIIMS) traverse the membrane as a helical segment. Residues 444–461 (TMDKFNVTKPIHALNNPV) lie on the Extracellular side of the membrane. An N-linked (GlcNAc...) asparagine glycan is attached at N449. The chain crosses the membrane as a helical span at residues 462-489 (ISQFFPTLLLWSFSALLPSIVYYSTLLE). The Cytoplasmic portion of the chain corresponds to 490–494 (SHWTR). Residues 495–531 (SGENRIMVSKVYIFLIFMVLILPSLGLTSLDFFFRWL) form a helical membrane-spanning segment. Topologically, residues 532-553 (FDKTSSETSIRLECVFLPDQGA) are extracellular. The chain crosses the membrane as a helical span at residues 554-585 (FFVNYVIASAFIGSGMELLRLPGLILYTFRMI). The tract at residues 554–585 (FFVNYVIASAFIGSGMELLRLPGLILYTFRMI) is gating helix. The Cytoplasmic segment spans residues 586 to 605 (MAKTAADRRNVKQNQAFEYE). The chain crosses the membrane as a helical span at residues 606–623 (FGAMYAWMLCVFTVIMAY). Residues 624 to 627 (SITC) are Extracellular-facing. A helical transmembrane segment spans residues 628-650 (PIIVPFGLIYILLKHMVDRHNLY). Over 651 to 660 (FAYLPAKLEK) the chain is Cytoplasmic. Residues 661 to 688 (RIHFAAVNQALAAPILCLFWLFFFSFLR) traverse the membrane as a helical segment. Residues 689-693 (LGLTA) are Extracellular-facing. The chain crosses the membrane as a helical span at residues 694–708 (PATLFTFLVVLLTIL). The Cytoplasmic segment spans residues 709–804 (ACLLYTCFGC…GTAAYAYQES (96 aa)). Position 738 is a phosphoserine (S738).

Belongs to the CSC1 (TC 1.A.17) family. As to quaternary structure, monomer. In terms of processing, N-Glycosylated.

The protein localises to the lysosome membrane. The protein resides in the early endosome membrane. It is found in the cell membrane. It carries out the reaction Ca(2+)(in) = Ca(2+)(out). Mechanosensitive cation channel with low conductance and high activation threshold. In contrast to TMEM63B, does not show phospholipid scramblase activity. Acts as a regulator of lysosomal morphology by mediating lysosomal mechanosensitivity. Important for the baby's first breath and respiration throughout life. Upon lung inflation conducts cation currents in alveolar type 1 and 2 cells triggering lamellar body exocytosis and surfactant secretion into airspace. Also acts as an osmosensitive cation channel preferentially activated by hypotonic stress. The chain is Mechanosensitive cation channel TMEM63A from Mus musculus (Mouse).